We begin with the raw amino-acid sequence, 459 residues long: Cysteine--tRNA ligase (459 aa).

Residue C28 coordinates Zn(2+). A 'HIGH' region motif is present at residues 30 to 40; that stretch reads VTVYDLCHIGH. Positions 209, 234, and 238 each coordinate Zn(2+). The 'KMSKS' region signature appears at 266 to 270; it reads KMSKS. K269 contributes to the ATP binding site.

It belongs to the class-I aminoacyl-tRNA synthetase family. In terms of assembly, monomer. Zn(2+) serves as cofactor.

Its subcellular location is the cytoplasm. It catalyses the reaction tRNA(Cys) + L-cysteine + ATP = L-cysteinyl-tRNA(Cys) + AMP + diphosphate. The protein is Cysteine--tRNA ligase of Histophilus somni (strain 2336) (Haemophilus somnus).